The sequence spans 215 residues: Nascent polypeptide-associated complex subunit alpha (215 aa).

The segment at Met1–Ser81 is disordered. The segment covering Val9 to Glu28 has biased composition (polar residues). Acidic residues predominate over residues Ser29–Asp42. A Phosphoserine; by ILK1 modification is found at Ser43. A compositionally biased stretch (low complexity) spans Thr44–Ala57. The required for DNA-binding stretch occupies residues Gln69 to Met80. Residues Ser70–Ala135 enclose the NAC-A/B domain. Positions Arg93–Lys108 are RNA/DNA-binding. Residue Ser132 is modified to Phosphoserine. Position 142 is an N6-acetyllysine; alternate (Lys142). Residue Lys142 forms a Glycyl lysine isopeptide (Lys-Gly) (interchain with G-Cter in SUMO2); alternate linkage. A Phosphothreonine; by GSK3-beta modification is found at Thr159. Thr161 carries the phosphothreonine modification. Residues Ser166, Ser186, Ser191, and Ser203 each carry the phosphoserine modification. Positions Val176 to Leu213 constitute a UBA domain.

It belongs to the NAC-alpha family. As to quaternary structure, part of the nascent polypeptide-associated complex (NAC), which is a heterodimer of NACA and BTF3 (via NAC-A/B domains). NAC associates with ribosomes through the BTF3/NACB subunit and contacts the ribosomal protein L23, which is positioned near the exiting site. Both subunits can contact nascent polypeptide chains. NACA may also form homodimers, and only this form binds DNA. Interacts with TBP and JUN. Phosphorylation of Ser-43 by ILK during cell adhesion may promote nuclear localization. Phosphorylation of Thr-159 by GSK3B may promote proteasome mediated degradation.

Its subcellular location is the cytoplasm. The protein localises to the nucleus. Its function is as follows. Prevents inappropriate targeting of non-secretory polypeptides to the endoplasmic reticulum (ER). Binds to nascent polypeptide chains as they emerge from the ribosome and blocks their interaction with the signal recognition particle (SRP), which normally targets nascent secretory peptides to the ER. Also reduces the inherent affinity of ribosomes for protein translocation sites in the ER membrane (M sites). May act as a specific coactivator for JUN, binding to DNA and stabilizing the interaction of JUN homodimers with target gene promoters. The protein is Nascent polypeptide-associated complex subunit alpha (NACA) of Pongo abelii (Sumatran orangutan).